Consider the following 270-residue polypeptide: MRLALGIRYNGQAYEGWQSQRSGRTVQDKLEAALAKFAAQPIGTLCAGRTDAGVHALMQVVHFDTTVEREPFSWMRGTNRFLPDDIAVQWAQPVPDEFHCRASALARRYLYVLSQSPVRPSLDSGRVGWSMHPLDGDAMRAAAALLVGKHDFSSFRASACQARSPVKDLRRIEITRVGSGDRCRWHFEFEADAFLHHMIRNLMGCLVRIGRGDERPEWITEVLEARSRKVAAPTFSANGLYFLGPLYDAKWGLPAEATLQAGGAPYDGPP.

The active-site Nucleophile is D51. Y109 is a binding site for substrate.

It belongs to the tRNA pseudouridine synthase TruA family. As to quaternary structure, homodimer.

The catalysed reaction is uridine(38/39/40) in tRNA = pseudouridine(38/39/40) in tRNA. Functionally, formation of pseudouridine at positions 38, 39 and 40 in the anticodon stem and loop of transfer RNAs. This Variovorax paradoxus (strain S110) protein is tRNA pseudouridine synthase A.